Consider the following 305-residue polypeptide: HPr kinase/phosphorylase (305 aa).

Catalysis depends on residues His-138 and Lys-159. Residue 153-160 (GESGIGKS) coordinates ATP. Ser-160 lines the Mg(2+) pocket. Asp-177 serves as the catalytic Proton acceptor; for phosphorylation activity. Proton donor; for dephosphorylation activity. An important for the catalytic mechanism of both phosphorylation and dephosphorylation region spans residues 201 to 210 (IEIRGIGILD). A Mg(2+)-binding site is contributed by Glu-202. Arg-243 is a catalytic residue. The interval 264 to 269 (PVRPGR) is important for the catalytic mechanism of dephosphorylation.

The protein belongs to the HPrK/P family. Homohexamer. It depends on Mg(2+) as a cofactor.

It carries out the reaction [HPr protein]-L-serine + ATP = [HPr protein]-O-phospho-L-serine + ADP + H(+). The catalysed reaction is [HPr protein]-O-phospho-L-serine + phosphate + H(+) = [HPr protein]-L-serine + diphosphate. In terms of biological role, catalyzes the ATP- as well as the pyrophosphate-dependent phosphorylation of a specific serine residue in HPr, a phosphocarrier protein of the phosphoenolpyruvate-dependent sugar phosphotransferase system (PTS). HprK/P also catalyzes the pyrophosphate-producing, inorganic phosphate-dependent dephosphorylation (phosphorolysis) of seryl-phosphorylated HPr (P-Ser-HPr). The two antagonistic activities of HprK/P are regulated by several intracellular metabolites, which change their concentration in response to the absence or presence of rapidly metabolisable carbon sources (glucose, fructose, etc.) in the growth medium. Therefore, by controlling the phosphorylation state of HPr, HPrK/P is a sensor enzyme that plays a major role in the regulation of carbon metabolism and sugar transport: it mediates carbon catabolite repression (CCR), and regulates PTS-catalyzed carbohydrate uptake and inducer exclusion. The sequence is that of HPr kinase/phosphorylase from Caldanaerobacter subterraneus subsp. tengcongensis (strain DSM 15242 / JCM 11007 / NBRC 100824 / MB4) (Thermoanaerobacter tengcongensis).